A 140-amino-acid polypeptide reads, in one-letter code: Putative nickel-responsive regulator 3 (140 aa).

H81, H92, H94, and C100 together coordinate Ni(2+).

The protein belongs to the transcriptional regulatory CopG/NikR family. Requires Ni(2+) as cofactor.

Transcriptional regulator. This chain is Putative nickel-responsive regulator 3, found in Methanosarcina acetivorans (strain ATCC 35395 / DSM 2834 / JCM 12185 / C2A).